The sequence spans 215 residues: ATP-dependent Clp protease proteolytic subunit (215 aa).

Residue serine 111 is the Nucleophile of the active site. Residue histidine 136 is part of the active site.

It belongs to the peptidase S14 family. In terms of assembly, fourteen ClpP subunits assemble into 2 heptameric rings which stack back to back to give a disk-like structure with a central cavity, resembling the structure of eukaryotic proteasomes.

It localises to the cytoplasm. It carries out the reaction Hydrolysis of proteins to small peptides in the presence of ATP and magnesium. alpha-casein is the usual test substrate. In the absence of ATP, only oligopeptides shorter than five residues are hydrolyzed (such as succinyl-Leu-Tyr-|-NHMec, and Leu-Tyr-Leu-|-Tyr-Trp, in which cleavage of the -Tyr-|-Leu- and -Tyr-|-Trp bonds also occurs).. Cleaves peptides in various proteins in a process that requires ATP hydrolysis. Has a chymotrypsin-like activity. Plays a major role in the degradation of misfolded proteins. The chain is ATP-dependent Clp protease proteolytic subunit from Hamiltonella defensa subsp. Acyrthosiphon pisum (strain 5AT).